A 469-amino-acid chain; its full sequence is D-3-phosphoglycerate dehydrogenase 1 (469 aa).

Phosphoserine occurs at positions 22, 29, and 33. NAD(+) is bound by residues 208 to 209 (HI), Asp228, 285 to 287 (ASR), and Asp311. Arg287 is a catalytic residue. Glu316 is an active-site residue. Catalysis depends on His347, which acts as the Proton donor. Residue 347–350 (HIGG) participates in NAD(+) binding. The 71-residue stretch at 399–469 (RVLYIHQNVP…SAKISIRLLY (71 aa)) folds into the ACT domain.

It belongs to the D-isomer specific 2-hydroxyacid dehydrogenase family.

The catalysed reaction is (2R)-3-phosphoglycerate + NAD(+) = 3-phosphooxypyruvate + NADH + H(+). It catalyses the reaction (R)-2-hydroxyglutarate + NAD(+) = 2-oxoglutarate + NADH + H(+). It functions in the pathway amino-acid biosynthesis; L-serine biosynthesis; L-serine from 3-phospho-D-glycerate: step 1/3. Functionally, catalyzes the reversible oxidation of 3-phospho-D-glycerate to 3-phosphonooxypyruvate, the first step of the phosphorylated L-serine biosynthesis pathway. Also catalyzes the reversible oxidation of 2-hydroxyglutarate to 2-oxoglutarate. This is D-3-phosphoglycerate dehydrogenase 1 (SER3) from Saccharomyces cerevisiae (strain ATCC 204508 / S288c) (Baker's yeast).